Reading from the N-terminus, the 155-residue chain is UPF0178 protein mlr0875 (155 aa).

The protein belongs to the UPF0178 family.

The polypeptide is UPF0178 protein mlr0875 (Mesorhizobium japonicum (strain LMG 29417 / CECT 9101 / MAFF 303099) (Mesorhizobium loti (strain MAFF 303099))).